Consider the following 426-residue polypeptide: Histidine--tRNA ligase (426 aa).

The protein belongs to the class-II aminoacyl-tRNA synthetase family. In terms of assembly, homodimer.

The protein resides in the cytoplasm. It catalyses the reaction tRNA(His) + L-histidine + ATP = L-histidyl-tRNA(His) + AMP + diphosphate + H(+). The protein is Histidine--tRNA ligase of Geobacillus kaustophilus (strain HTA426).